The following is a 281-amino-acid chain: Phosphatidylserine decarboxylase proenzyme (281 aa).

Catalysis depends on charge relay system; for autoendoproteolytic cleavage activity residues Asp90, His143, and Ser248. Residue Ser248 is the Schiff-base intermediate with substrate; via pyruvic acid; for decarboxylase activity of the active site. A Pyruvic acid (Ser); by autocatalysis modification is found at Ser248.

The protein belongs to the phosphatidylserine decarboxylase family. PSD-B subfamily. Prokaryotic type I sub-subfamily. As to quaternary structure, heterodimer of a large membrane-associated beta subunit and a small pyruvoyl-containing alpha subunit. The cofactor is pyruvate. Post-translationally, is synthesized initially as an inactive proenzyme. Formation of the active enzyme involves a self-maturation process in which the active site pyruvoyl group is generated from an internal serine residue via an autocatalytic post-translational modification. Two non-identical subunits are generated from the proenzyme in this reaction, and the pyruvate is formed at the N-terminus of the alpha chain, which is derived from the carboxyl end of the proenzyme. The autoendoproteolytic cleavage occurs by a canonical serine protease mechanism, in which the side chain hydroxyl group of the serine supplies its oxygen atom to form the C-terminus of the beta chain, while the remainder of the serine residue undergoes an oxidative deamination to produce ammonia and the pyruvoyl prosthetic group on the alpha chain. During this reaction, the Ser that is part of the protease active site of the proenzyme becomes the pyruvoyl prosthetic group, which constitutes an essential element of the active site of the mature decarboxylase.

It is found in the cell membrane. It catalyses the reaction a 1,2-diacyl-sn-glycero-3-phospho-L-serine + H(+) = a 1,2-diacyl-sn-glycero-3-phosphoethanolamine + CO2. The protein operates within phospholipid metabolism; phosphatidylethanolamine biosynthesis; phosphatidylethanolamine from CDP-diacylglycerol: step 2/2. Functionally, catalyzes the formation of phosphatidylethanolamine (PtdEtn) from phosphatidylserine (PtdSer). This is Phosphatidylserine decarboxylase proenzyme from Francisella philomiragia subsp. philomiragia (strain ATCC 25017 / CCUG 19701 / FSC 153 / O#319-036).